Reading from the N-terminus, the 454-residue chain is Probable ECA polymerase (454 aa).

The next 11 membrane-spanning stretches (helical) occupy residues 3–23, 39–59, 61–81, 119–139, 154–174, 180–200, 201–221, 222–242, 340–360, 377–397, and 409–429; these read LGQF…ILTL, FSML…MLVF, FGVA…ATAF, LALV…FLLF, GVAL…VYFL, AWFF…VIVG, GTRA…IVRG, WITL…MFWL, LVVM…GLII, YKAA…IVLA, and VFFC…YWLF.

Belongs to the WzyE family. In terms of assembly, probably part of a complex composed of WzxE, WzyE and WzzE.

The protein localises to the cell inner membrane. It functions in the pathway bacterial outer membrane biogenesis; enterobacterial common antigen biosynthesis. Functionally, probably involved in the polymerization of enterobacterial common antigen (ECA) trisaccharide repeat units. The protein is Probable ECA polymerase of Yersinia pestis bv. Antiqua (strain Angola).